The sequence spans 162 residues: Ribonuclease H (162 aa).

Positions 1 to 141 (MKRIEIFTDG…ADALARAGMA (141 aa)) constitute an RNase H type-1 domain. Mg(2+) contacts are provided by Asp-9, Glu-47, Asp-69, and Asp-133. Residues 139–162 (GMAPFKKKKGGDTASSEEGSARRR) form a disordered region.

This sequence belongs to the RNase H family. In terms of assembly, monomer. It depends on Mg(2+) as a cofactor.

It is found in the cytoplasm. The enzyme catalyses Endonucleolytic cleavage to 5'-phosphomonoester.. Endonuclease that specifically degrades the RNA of RNA-DNA hybrids. In Chelativorans sp. (strain BNC1), this protein is Ribonuclease H.